Reading from the N-terminus, the 302-residue chain is Sulfate adenylyltransferase subunit 2 (302 aa).

The protein belongs to the PAPS reductase family. CysD subfamily. As to quaternary structure, heterodimer composed of CysD, the smaller subunit, and CysN.

It carries out the reaction sulfate + ATP + H(+) = adenosine 5'-phosphosulfate + diphosphate. Its pathway is sulfur metabolism; hydrogen sulfide biosynthesis; sulfite from sulfate: step 1/3. Functionally, with CysN forms the ATP sulfurylase (ATPS) that catalyzes the adenylation of sulfate producing adenosine 5'-phosphosulfate (APS) and diphosphate, the first enzymatic step in sulfur assimilation pathway. APS synthesis involves the formation of a high-energy phosphoric-sulfuric acid anhydride bond driven by GTP hydrolysis by CysN coupled to ATP hydrolysis by CysD. This chain is Sulfate adenylyltransferase subunit 2, found in Methylococcus capsulatus (strain ATCC 33009 / NCIMB 11132 / Bath).